A 322-amino-acid chain; its full sequence is Methionyl-tRNA formyltransferase (322 aa).

A (6S)-5,6,7,8-tetrahydrofolate-binding site is contributed by 112–115 (SLLP).

Belongs to the Fmt family.

The enzyme catalyses L-methionyl-tRNA(fMet) + (6R)-10-formyltetrahydrofolate = N-formyl-L-methionyl-tRNA(fMet) + (6S)-5,6,7,8-tetrahydrofolate + H(+). In terms of biological role, attaches a formyl group to the free amino group of methionyl-tRNA(fMet). The formyl group appears to play a dual role in the initiator identity of N-formylmethionyl-tRNA by promoting its recognition by IF2 and preventing the misappropriation of this tRNA by the elongation apparatus. The protein is Methionyl-tRNA formyltransferase of Synechococcus sp. (strain JA-3-3Ab) (Cyanobacteria bacterium Yellowstone A-Prime).